The primary structure comprises 143 residues: MSTGLFDFNGTLPVMGLQVVLLSWLLEQILYSPIQGVIQKRQNKIQQELQLAADQLQKAQQLTQEYQTQLQKAREKARERIRQVQQEAQTMMEDQLKQAQQQMTQLFNEAMQQLEQQKQQALMNLSNQVDEVAKFILSKLMKQ.

A helical transmembrane segment spans residues 12–31; the sequence is LPVMGLQVVLLSWLLEQILY.

The protein belongs to the ATPase B chain family. F-type ATPases have 2 components, F(1) - the catalytic core - and F(0) - the membrane proton channel. F(1) has five subunits: alpha(3), beta(3), gamma(1), delta(1), epsilon(1). F(0) has four main subunits: a(1), b(1), b'(1) and c(10-14). The alpha and beta chains form an alternating ring which encloses part of the gamma chain. F(1) is attached to F(0) by a central stalk formed by the gamma and epsilon chains, while a peripheral stalk is formed by the delta, b and b' chains.

It is found in the plastid. The protein resides in the chloroplast thylakoid membrane. Functionally, f(1)F(0) ATP synthase produces ATP from ADP in the presence of a proton or sodium gradient. F-type ATPases consist of two structural domains, F(1) containing the extramembraneous catalytic core and F(0) containing the membrane proton channel, linked together by a central stalk and a peripheral stalk. During catalysis, ATP synthesis in the catalytic domain of F(1) is coupled via a rotary mechanism of the central stalk subunits to proton translocation. Its function is as follows. Component of the F(0) channel, it forms part of the peripheral stalk, linking F(1) to F(0). The b'-subunit is a diverged and duplicated form of b found in plants and photosynthetic bacteria. The polypeptide is ATP synthase subunit b', chloroplastic (Cyanidioschyzon merolae (strain NIES-3377 / 10D) (Unicellular red alga)).